A 416-amino-acid polypeptide reads, in one-letter code: Probable pectate lyase 8 (416 aa).

The first 24 residues, M1–A24, serve as a signal peptide directing secretion. 3 N-linked (GlcNAc...) asparagine glycosylation sites follow: N23, N28, and N52. 3 residues coordinate Ca(2+): D214, D238, and D242. The active site involves R294.

This sequence belongs to the polysaccharide lyase 1 family. Ca(2+) serves as cofactor.

The catalysed reaction is Eliminative cleavage of (1-&gt;4)-alpha-D-galacturonan to give oligosaccharides with 4-deoxy-alpha-D-galact-4-enuronosyl groups at their non-reducing ends.. It participates in glycan metabolism; pectin degradation; 2-dehydro-3-deoxy-D-gluconate from pectin: step 2/5. The protein is Probable pectate lyase 8 of Arabidopsis thaliana (Mouse-ear cress).